A 213-amino-acid polypeptide reads, in one-letter code: tRNA (guanine-N(7)-)-methyltransferase (213 aa).

The S-adenosyl-L-methionine site is built by E44, E69, N96, and D118. D118 is a catalytic residue. K122 is a substrate binding site. Residues 124–129 (RHEKRR) form an interaction with RNA region. Residues D154 and 191-194 (TEYE) each bind substrate.

This sequence belongs to the class I-like SAM-binding methyltransferase superfamily. TrmB family.

It carries out the reaction guanosine(46) in tRNA + S-adenosyl-L-methionine = N(7)-methylguanosine(46) in tRNA + S-adenosyl-L-homocysteine. It functions in the pathway tRNA modification; N(7)-methylguanine-tRNA biosynthesis. In terms of biological role, catalyzes the formation of N(7)-methylguanine at position 46 (m7G46) in tRNA. This is tRNA (guanine-N(7)-)-methyltransferase from Bacillus licheniformis (strain ATCC 14580 / DSM 13 / JCM 2505 / CCUG 7422 / NBRC 12200 / NCIMB 9375 / NCTC 10341 / NRRL NRS-1264 / Gibson 46).